The following is an 85-amino-acid chain: Phosphocarrier protein HPr (85 aa).

The HPr domain occupies 1 to 85; sequence MYEKQVEITA…HLVALMDQLH (85 aa). Histidine 15 serves as the catalytic Pros-phosphohistidine intermediate.

Belongs to the HPr family.

Its subcellular location is the cytoplasm. In terms of biological role, general (non sugar-specific) component of the phosphoenolpyruvate-dependent sugar phosphotransferase system (sugar PTS). This major carbohydrate active-transport system catalyzes the phosphorylation of incoming sugar substrates concomitantly with their translocation across the cell membrane. The phosphoryl group from phosphoenolpyruvate (PEP) is transferred to the phosphoryl carrier protein HPr by enzyme I. Phospho-HPr then transfers it to the PTS EIIA domain. The sequence is that of Phosphocarrier protein HPr (ptsH) from Vibrio cholerae serotype O1 (strain ATCC 39315 / El Tor Inaba N16961).